The sequence spans 171 residues: uncharacterized protein (171 aa).

To A.aeolicus aq_616.

This is an uncharacterized protein from Aquifex aeolicus (strain VF5).